Consider the following 331-residue polypeptide: Ketol-acid reductoisomerase (NADP(+)) (331 aa).

The KARI N-terminal Rossmann domain maps to 2–181 (IKKYYESDAD…GATRAVVFET (180 aa)). NADP(+) contacts are provided by residues 25–28 (YGSQ), R48, S52, and 82–85 (DESQ). The active site involves H107. G133 contacts NADP(+). Positions 182–327 (TFREETETDL…AEIRGLMPQF (146 aa)) constitute a KARI C-terminal knotted domain. Mg(2+)-binding residues include D190, E194, E226, and E230. Substrate is bound at residue S251.

This sequence belongs to the ketol-acid reductoisomerase family. Mg(2+) serves as cofactor.

It carries out the reaction (2R)-2,3-dihydroxy-3-methylbutanoate + NADP(+) = (2S)-2-acetolactate + NADPH + H(+). The enzyme catalyses (2R,3R)-2,3-dihydroxy-3-methylpentanoate + NADP(+) = (S)-2-ethyl-2-hydroxy-3-oxobutanoate + NADPH + H(+). The protein operates within amino-acid biosynthesis; L-isoleucine biosynthesis; L-isoleucine from 2-oxobutanoate: step 2/4. It functions in the pathway amino-acid biosynthesis; L-valine biosynthesis; L-valine from pyruvate: step 2/4. In terms of biological role, involved in the biosynthesis of branched-chain amino acids (BCAA). Catalyzes an alkyl-migration followed by a ketol-acid reduction of (S)-2-acetolactate (S2AL) to yield (R)-2,3-dihydroxy-isovalerate. In the isomerase reaction, S2AL is rearranged via a Mg-dependent methyl migration to produce 3-hydroxy-3-methyl-2-ketobutyrate (HMKB). In the reductase reaction, this 2-ketoacid undergoes a metal-dependent reduction by NADPH to yield (R)-2,3-dihydroxy-isovalerate. The protein is Ketol-acid reductoisomerase (NADP(+)) of Methanosphaerula palustris (strain ATCC BAA-1556 / DSM 19958 / E1-9c).